The chain runs to 204 residues: Holliday junction branch migration complex subunit RuvA (204 aa).

Residues 1–64 (MIGKLKGTID…EDQLKLFGFM (64 aa)) are domain I. Residues 65 to 143 (TALEREWFNL…AFAGEAINIA (79 aa)) form a domain II region. Residues 144–151 (LKQELGEG) are flexible linker. A domain III region spans residues 152–204 (VAAAPVADAVSALTNLGYSRDQAANAVAAAMKTAGDDADSAKLIRLGLKELAR).

It belongs to the RuvA family. As to quaternary structure, homotetramer. Forms an RuvA(8)-RuvB(12)-Holliday junction (HJ) complex. HJ DNA is sandwiched between 2 RuvA tetramers; dsDNA enters through RuvA and exits via RuvB. An RuvB hexamer assembles on each DNA strand where it exits the tetramer. Each RuvB hexamer is contacted by two RuvA subunits (via domain III) on 2 adjacent RuvB subunits; this complex drives branch migration. In the full resolvosome a probable DNA-RuvA(4)-RuvB(12)-RuvC(2) complex forms which resolves the HJ.

It localises to the cytoplasm. In terms of biological role, the RuvA-RuvB-RuvC complex processes Holliday junction (HJ) DNA during genetic recombination and DNA repair, while the RuvA-RuvB complex plays an important role in the rescue of blocked DNA replication forks via replication fork reversal (RFR). RuvA specifically binds to HJ cruciform DNA, conferring on it an open structure. The RuvB hexamer acts as an ATP-dependent pump, pulling dsDNA into and through the RuvAB complex. HJ branch migration allows RuvC to scan DNA until it finds its consensus sequence, where it cleaves and resolves the cruciform DNA. This is Holliday junction branch migration complex subunit RuvA from Rhizobium leguminosarum bv. trifolii (strain WSM2304).